The primary structure comprises 445 residues: Histamine H3 receptor (445 aa).

The Extracellular segment spans residues 1-39; sequence MERAPPDGLMNASGALAGEAAAAGGARGFSAAWTAVLAA. N11 carries N-linked (GlcNAc...) asparagine glycosylation. Residues 40–60 form a helical membrane-spanning segment; the sequence is LMALLIVATVLGNALVMLAFV. Over 61–70 the chain is Cytoplasmic; the sequence is ADSSLRTQNN. A helical membrane pass occupies residues 71–91; that stretch reads FFLLNLAISDFLVGAFCIPLY. Residues 92–108 are Extracellular-facing; it reads VPYVLTGRWTFGRGLCK. An intrachain disulfide couples C107 to C188. The chain crosses the membrane as a helical span at residues 109–129; it reads LWLVVDYLLCASSVFNIVLIS. Residues 130–156 are Cytoplasmic-facing; it reads YDRFLSVTRAVSYRAQQGDTRRAVRKM. A helical transmembrane segment spans residues 157–177; that stretch reads ALVWVLAFLLYGPAILSWEYL. The Extracellular portion of the chain corresponds to 178–196; that stretch reads SGGSSIPEGHCYAEFFYNW. Residues 197–217 form a helical membrane-spanning segment; that stretch reads YFLITASTLEFFTPFLSVTFF. At 218-359 the chain is on the cytoplasmic side; sequence NLSIYLNIQR…LSRDKKVAKS (142 aa). Disordered stretches follow at residues 234–259 and 273–336; these read DGGREAGPEPPPDAQPSPPPAPPSCW and HRYG…LEKR. The segment covering 241–256 has biased composition (pro residues); that stretch reads PEPPPDAQPSPPPAPP. Over residues 289 to 299 the composition is skewed to gly residues; the sequence is AGLGGGSGGGA. Over residues 300 to 312 the composition is skewed to low complexity; sequence AASPTSSSGSSSR. Residues 360–380 form a helical membrane-spanning segment; it reads LAIIVSIFGLCWAPYTLLMII. The Extracellular segment spans residues 381–396; it reads RAACHGHCVPDYWYET. Residues 397–417 form a helical membrane-spanning segment; the sequence is SFWLLWANSAVNPVLYPLCHY. The Cytoplasmic segment spans residues 418–445; the sequence is SFRRAFTKLLCPQKLKVQPHGSLEQCWK. S439 carries the phosphoserine modification.

It belongs to the G-protein coupled receptor 1 family.

The protein resides in the cell membrane. Its function is as follows. The H3 subclass of histamine receptors could mediate the histamine signals in CNS and peripheral nervous system. Signals through the inhibition of adenylate cyclase and displays high constitutive activity (spontaneous activity in the absence of agonist). This is Histamine H3 receptor (Hrh3) from Mus musculus (Mouse).